Here is a 286-residue protein sequence, read N- to C-terminus: Pantothenate synthetase (286 aa).

30 to 37 (MGCFHQGH) is an ATP binding site. The Proton donor role is filled by H37. Q61 provides a ligand contact to (R)-pantoate. Position 61 (Q61) interacts with beta-alanine. 147 to 150 (GEKD) serves as a coordination point for ATP. A (R)-pantoate-binding site is contributed by Q153. 184–187 (MSSR) contributes to the ATP binding site.

Belongs to the pantothenate synthetase family. Homodimer.

The protein resides in the cytoplasm. It carries out the reaction (R)-pantoate + beta-alanine + ATP = (R)-pantothenate + AMP + diphosphate + H(+). The protein operates within cofactor biosynthesis; (R)-pantothenate biosynthesis; (R)-pantothenate from (R)-pantoate and beta-alanine: step 1/1. In terms of biological role, catalyzes the condensation of pantoate with beta-alanine in an ATP-dependent reaction via a pantoyl-adenylate intermediate. This is Pantothenate synthetase from Desulfotalea psychrophila (strain LSv54 / DSM 12343).